The sequence spans 316 residues: MNTSITARELFDQQRDKLALRWVAGQKGEHREIQAGSNNARRPSLAGYLNVIYPNKVQILGTEELAWLDSLDARQRWETIEKIIQVQPLALAISKNQSCPEDLRAAADESNTPLWISPKRGHELLNHLSYHLARTLAPRVTLHGVFMEIYSIGVLITGEAGSGKSELALELLSRGHRLVADDAPEFTQIAPDVLDGTCPELLQDLLEVRGLGVLNVRDMFGDTAVKKNKYLRLIVHLTRPMTEPTPSGYERLTGDSGSRHVLDLDVPLITLPVMPGRNLAVLTEAATRLHILRTKGIDPAAMFIARHSNLLERRTP.

Catalysis depends on residues His-143 and Lys-164. Residue 158 to 165 (GEAGSGKS) participates in ATP binding. Ser-165 lines the Mg(2+) pocket. Asp-182 functions as the Proton acceptor; for phosphorylation activity. Proton donor; for dephosphorylation activity in the catalytic mechanism. Residues 206–215 (LEVRGLGVLN) are important for the catalytic mechanism of both phosphorylation and dephosphorylation. Glu-207 provides a ligand contact to Mg(2+). Arg-251 is an active-site residue. The tract at residues 272–277 (PVMPGR) is important for the catalytic mechanism of dephosphorylation.

The protein belongs to the HPrK/P family. In terms of assembly, homohexamer. The cofactor is Mg(2+).

The enzyme catalyses [HPr protein]-L-serine + ATP = [HPr protein]-O-phospho-L-serine + ADP + H(+). It catalyses the reaction [HPr protein]-O-phospho-L-serine + phosphate + H(+) = [HPr protein]-L-serine + diphosphate. Functionally, catalyzes the ATP- as well as the pyrophosphate-dependent phosphorylation of a specific serine residue in HPr, a phosphocarrier protein of the phosphoenolpyruvate-dependent sugar phosphotransferase system (PTS). HprK/P also catalyzes the pyrophosphate-producing, inorganic phosphate-dependent dephosphorylation (phosphorolysis) of seryl-phosphorylated HPr (P-Ser-HPr). In Xanthomonas campestris pv. campestris (strain 8004), this protein is HPr kinase/phosphorylase.